The following is a 439-amino-acid chain: F-box/FBD/LRR-repeat protein At5g56570 (439 aa).

The F-box domain maps to 35-81 (PTELSDMPDDLIFKIFSFLPFFKEDLATRFISEYGKGLWNPDPNAIF). 2 LRR repeats span residues 155–177 (CTTL…WFRL) and 223–246 (VPTL…SFWI). The FBD domain maps to 361–411 (VWEKPTVVPECLSTRLEILKWRDYEGTEHEKDMVGYILANATFLQRATFST).

This Arabidopsis thaliana (Mouse-ear cress) protein is F-box/FBD/LRR-repeat protein At5g56570.